A 266-amino-acid polypeptide reads, in one-letter code: Exosome complex component Rrp42 (266 aa).

It belongs to the RNase PH family. Rrp42 subfamily. In terms of assembly, component of the archaeal exosome complex. Forms a hexameric ring-like arrangement composed of 3 Rrp41-Rrp42 heterodimers. The hexameric ring associates with a trimer of Rrp4 and/or Csl4 subunits.

The protein localises to the cytoplasm. Its function is as follows. Non-catalytic component of the exosome, which is a complex involved in RNA degradation. Contributes to the structuring of the Rrp41 active site. In Methanosarcina mazei (strain ATCC BAA-159 / DSM 3647 / Goe1 / Go1 / JCM 11833 / OCM 88) (Methanosarcina frisia), this protein is Exosome complex component Rrp42.